We begin with the raw amino-acid sequence, 299 residues long: Pentalenolactone F synthase (299 aa).

Residues histidine 105 and aspartate 107 each coordinate Fe cation. Residues threonine 133 and tryptophan 251 each coordinate 2-oxoglutarate. Histidine 266 serves as a coordination point for Fe cation. Arginine 277 contacts 2-oxoglutarate.

This sequence belongs to the TfdA dioxygenase family. Requires Fe(2+) as cofactor.

The enzyme catalyses pentalenolactone D + 2 2-oxoglutarate + 2 O2 = pentalenolactone F + 2 succinate + 2 CO2 + H2O. Its pathway is antibiotic biosynthesis; pentalenolactone biosynthesis. Activated by ascorbate. Functionally, catalyzes the Fe(2+) and alpha-ketoglutarate-dependent oxidation of pentalenolactone D to pentalenolactone F in the biosynthesis of pentalenolactone antibiotic. Also able to catalyze the oxidation of pentalenolactone D to pentalenolactone E. This is Pentalenolactone F synthase (pntD) from Streptomyces arenae.